The sequence spans 327 residues: Zinc transport protein ZntB (327 aa).

At 1–273 the chain is on the cytoplasmic side; the sequence is MEAIKGSDVN…ARRTYTMSLM (273 aa). The helical transmembrane segment at 274-294 threads the bilayer; it reads AMVFLPSTFLTGLFGVNLGGI. The Periplasmic portion of the chain corresponds to 295–300; the sequence is PGGGWR. A helical membrane pass occupies residues 301–321; that stretch reads FGFSLFCILLVVLIGGVTLWL. Over 322–327 the chain is Cytoplasmic; it reads HRSKWL.

The protein belongs to the CorA metal ion transporter (MIT) (TC 1.A.35) family.

Its subcellular location is the cell inner membrane. It carries out the reaction Zn(2+)(out) + H(+)(out) = Zn(2+)(in) + H(+)(in). Its function is as follows. Zinc transporter. Acts as a Zn(2+):proton symporter, which likely mediates zinc ion uptake. In Salmonella agona (strain SL483), this protein is Zinc transport protein ZntB.